Reading from the N-terminus, the 155-residue chain is 1,4-dihydroxy-2-naphthoyl-CoA hydrolase (155 aa).

Aspartate 27 is a catalytic residue.

This sequence belongs to the 4-hydroxybenzoyl-CoA thioesterase family. DHNA-CoA hydrolase subfamily.

The enzyme catalyses 1,4-dihydroxy-2-naphthoyl-CoA + H2O = 1,4-dihydroxy-2-naphthoate + CoA + H(+). It functions in the pathway cofactor biosynthesis; phylloquinone biosynthesis. It participates in quinol/quinone metabolism; 1,4-dihydroxy-2-naphthoate biosynthesis; 1,4-dihydroxy-2-naphthoate from chorismate: step 7/7. Functionally, catalyzes the hydrolysis of 1,4-dihydroxy-2-naphthoyl-CoA (DHNA-CoA) to 1,4-dihydroxy-2-naphthoate (DHNA), a reaction involved in phylloquinone (vitamin K1) biosynthesis. The chain is 1,4-dihydroxy-2-naphthoyl-CoA hydrolase from Prochlorococcus marinus (strain NATL2A).